Reading from the N-terminus, the 439-residue chain is Divalent metal cation transporter MntH (439 aa).

A run of 11 helical transmembrane segments spans residues 32–52 (GASMLLPFAGPAVVVSVAYMD), 67–87 (GYALLWVVLLANVVAMLFQSL), 121–141 (IAAMATDLAAFLGGAIGLSLL), 144–164 (MPLLGGMVVTAIVTYGLLLLE), 173–193 (LAIGALVGIIGLSYLAELFIT), 214–234 (ALLIAVGIVGATVMPHALFLH), 261–281 (VVVALAIAGLINMAMVIMAAG), 301–321 (APLLGIGAAGVFLLSLIASGI), 350–370 (AVTMAPSFAVVALGVNVTQAL), 371–391 (VLSQVVLSLALPLPMAALLWF), and 406–426 (FIAVIATLAACAVLAFNAVLI).

This sequence belongs to the NRAMP family.

Its subcellular location is the cell inner membrane. H(+)-stimulated, divalent metal cation uptake system. This Verminephrobacter eiseniae (strain EF01-2) protein is Divalent metal cation transporter MntH.